A 544-amino-acid polypeptide reads, in one-letter code: Probable protein kinase UbiB (544 aa).

The Protein kinase domain maps to 123-501 (EFDIKPLASA…KRQQATGKFL (379 aa)). Residues 129–137 (LASASIAQV) and lysine 152 each bind ATP. Aspartate 287 (proton acceptor) is an active-site residue. Transmembrane regions (helical) follow at residues 496–516 (ATGKFLFGVGATLVVCSAILV) and 519–539 (AYEQLSMASGIAGVTFWLLSW).

Belongs to the ABC1 family. UbiB subfamily.

Its subcellular location is the cell inner membrane. It functions in the pathway cofactor biosynthesis; ubiquinone biosynthesis [regulation]. Is probably a protein kinase regulator of UbiI activity which is involved in aerobic coenzyme Q (ubiquinone) biosynthesis. In Vibrio parahaemolyticus serotype O3:K6 (strain RIMD 2210633), this protein is Probable protein kinase UbiB.